A 317-amino-acid polypeptide reads, in one-letter code: MTVMSHLRVSLQVSSCTLLWRRFRVPRLVPLRSCSLYTCTYRTRNRALPPLWENLDLVPAGDRQSPINIRWRDSVYDPGLKPLTISYDPATCLHIWNNGYSFLVEFEDTTDKSVIEGGPLEHNYRLKQFHFHWGAIDAWGSEHTVDSKCYPAELHLVHWNAVKFESFEDAALEENGLAVIGVFLKLGKHHKELQKLVDTLPSIKHKDTLVKFGSFDPSCLMPTCPDYWTYSGSLTTPPLSESVTWIIKKQPVEVDHDQLEQFRTLLFTSEGEKEKRMVDNFRPLQPLMNRTVRSSFRHDYVLNIQVKPEPTASEVSP.

The N-terminal 33 residues, 1–33 (MTVMSHLRVSLQVSSCTLLWRRFRVPRLVPLRS), are a transit peptide targeting the mitochondrion. In terms of domain architecture, Alpha-carbonic anhydrase spans 37–296 (YTCTYRTRNR…LMNRTVRSSF (260 aa)). Zn(2+) is bound by residues His-130, His-132, and His-155. Substrate is bound at residue 235-236 (TT).

This sequence belongs to the alpha-carbonic anhydrase family. Zn(2+) serves as cofactor.

The protein localises to the mitochondrion. The catalysed reaction is hydrogencarbonate + H(+) = CO2 + H2O. Mitochondrial carbonic anhydrase that catalyzes the reversible conversion of carbon dioxide to bicarbonate/HCO3. The polypeptide is Carbonic anhydrase 5B, mitochondrial (Ca5b) (Rattus norvegicus (Rat)).